The primary structure comprises 407 residues: Imidazolonepropionase (407 aa).

The Fe(3+) site is built by histidine 68 and histidine 70. Residues histidine 68 and histidine 70 each coordinate Zn(2+). 4-imidazolone-5-propanoate contacts are provided by arginine 77, tyrosine 140, and histidine 173. N-formimidoyl-L-glutamate is bound at residue tyrosine 140. Residue histidine 238 coordinates Fe(3+). A Zn(2+)-binding site is contributed by histidine 238. Residue glutamine 241 participates in 4-imidazolone-5-propanoate binding. Aspartate 313 serves as a coordination point for Fe(3+). Aspartate 313 is a Zn(2+) binding site. Positions 315 and 317 each coordinate N-formimidoyl-L-glutamate. Threonine 318 is a binding site for 4-imidazolone-5-propanoate.

It belongs to the metallo-dependent hydrolases superfamily. HutI family. It depends on Zn(2+) as a cofactor. The cofactor is Fe(3+).

It localises to the cytoplasm. The enzyme catalyses 4-imidazolone-5-propanoate + H2O = N-formimidoyl-L-glutamate. The protein operates within amino-acid degradation; L-histidine degradation into L-glutamate; N-formimidoyl-L-glutamate from L-histidine: step 3/3. In terms of biological role, catalyzes the hydrolytic cleavage of the carbon-nitrogen bond in imidazolone-5-propanoate to yield N-formimidoyl-L-glutamate. It is the third step in the universal histidine degradation pathway. This Burkholderia pseudomallei (strain 668) protein is Imidazolonepropionase.